A 461-amino-acid chain; its full sequence is Calcitonin gene-related peptide type 1 receptor (461 aa).

The N-terminal stretch at 1–22 (MEKKCTLYFLVLLPFFMILVTA) is a signal peptide. The Extracellular segment spans residues 23–139 (ELEESPEDSI…NTHEKVKTAL (117 aa)). Disulfide bonds link Cys48/Cys74, Cys65/Cys105, and Cys88/Cys127. Asn66, Asn118, and Asn123 each carry an N-linked (GlcNAc...) asparagine glycan. Residues 140 to 164 (NLFYLTIIGHGLSIASLLISLGIFF) form a helical membrane-spanning segment. Residues 165-175 (YFKSLSCQRIT) are Cytoplasmic-facing. The helical transmembrane segment at 176-198 (LHKNLFFSFVCNSVVTIIHLTAV) threads the bilayer. The Extracellular segment spans residues 199–209 (ANNQALVATNP). Residues 210–238 (VSCKVSQFIHLYLMGCNYFWMLCEGIYLH) traverse the membrane as a helical segment. The Cytoplasmic portion of the chain corresponds to 239 to 252 (TLIVVAVFAEKQHL). A helical transmembrane segment spans residues 253–273 (MWYYFLGWGFPLIPACIHAIA). Topologically, residues 274 to 289 (RSLYYNDNCWISSDTH) are extracellular. The segment at 288-289 (TH) is required for RAMP3 interaction. The helical transmembrane segment at 290–314 (LLYIIHGPICAALLVNLFFLLNIVR) threads the bilayer. The Cytoplasmic portion of the chain corresponds to 315 to 329 (VLITKLKVTHQAESN). Residues 330–351 (LYMKAVRATLILVPLLGIEFVL) form a helical membrane-spanning segment. Topologically, residues 352–366 (IPWRPEGKIAEEVYD) are extracellular. The helical transmembrane segment at 367 to 387 (YIMHILMHFQGLLVSTIFCFF) threads the bilayer. 2 positions are modified to phosphoserine: Ser420 and Ser445.

It belongs to the G-protein coupled receptor 2 family. In terms of assembly, heterodimer of CALCRL and RAMP1; the receptor complex functions as CGRP receptor. Heterodimer of CALCRL and RAMP2 or CALCRL and RAMP3; the complexes function as adrenomedullin receptor. Predominantly expressed in the lung and heart.

Its subcellular location is the cell membrane. Functionally, g protein-coupled receptor which specificity is determined by its interaction with receptor-activity-modifying proteins (RAMPs). Together with RAMP1, form the receptor complex for calcitonin-gene-related peptides CALCA/CGRP1 and CALCB/CGRP2. Together with RAMP2 or RAMP3, function as receptor complexes for adrenomedullin (ADM and ADM2). Ligand binding causes a conformation change that triggers signaling via guanine nucleotide-binding proteins (G proteins) and modulates the activity of downstream effectors. Activates cAMP-dependent pathway. The protein is Calcitonin gene-related peptide type 1 receptor of Homo sapiens (Human).